Here is an 861-residue protein sequence, read N- to C-terminus: Probable linoleate 9S-lipoxygenase 7 (861 aa).

Residues Asn29 to Ala160 form the PLAT domain. Residues Pro163 to Ile861 form the Lipoxygenase domain. The disordered stretch occupies residues Thr220–Ser246. Residues His522, His527, His713, Asn717, and Ile861 each coordinate Fe cation.

This sequence belongs to the lipoxygenase family. In terms of assembly, monomer. It depends on Fe cation as a cofactor. As to expression, expressed in tubers. Detected in sprouts and flowers. but not in leaves or stems.

It is found in the cytoplasm. The catalysed reaction is (9Z,12Z)-octadecadienoate + O2 = (9S)-hydroperoxy-(10E,12Z)-octadecadienoate. Its pathway is lipid metabolism; oxylipin biosynthesis. In terms of biological role, plant lipoxygenases may be involved in a number of diverse aspects of plant physiology including growth and development, pest resistance, and senescence or responses to wounding. Catalyzes the hydroperoxidation of lipids containing a cis,cis-1,4-pentadiene structure. The polypeptide is Probable linoleate 9S-lipoxygenase 7 (LOX1.7) (Solanum tuberosum (Potato)).